The following is a 760-amino-acid chain: Endoplasmin homolog (760 aa).

A signal peptide spans 1–23 (MRFLLVGFVALLAVSAFIPNVYA). ATP contacts are provided by Asn95, Asp137, Asn150, and Phe187. N-linked (GlcNAc...) asparagine glycosylation occurs at Asn95. The N-linked (GlcNAc...) asparagine glycan is linked to Asn423. Residues 727 to 760 (SQDAQVETEQHIEEAEPEPEAAEETTIEEEHSEL) form a disordered region. Residues 741 to 760 (AEPEPEAAEETTIEEEHSEL) show a composition bias toward acidic residues. The short motif at 757–760 (HSEL) is the Prevents secretion from ER element.

The protein belongs to the heat shock protein 90 family.

The protein localises to the endoplasmic reticulum lumen. In terms of biological role, molecular chaperone that functions in the processing and transport of secreted proteins. The sequence is that of Endoplasmin homolog from Caenorhabditis elegans.